Here is a 218-residue protein sequence, read N- to C-terminus: Octanoyltransferase (218 aa).

The BPL/LPL catalytic domain occupies 32-211 (INTYDEIWFL…KLSQLLNVSI (180 aa)). Residues 75–82 (RGGQITYH), 142–144 (SLG), and 155–157 (GLS) each bind substrate. Catalysis depends on cysteine 173, which acts as the Acyl-thioester intermediate.

This sequence belongs to the LipB family.

It is found in the cytoplasm. It carries out the reaction octanoyl-[ACP] + L-lysyl-[protein] = N(6)-octanoyl-L-lysyl-[protein] + holo-[ACP] + H(+). It functions in the pathway protein modification; protein lipoylation via endogenous pathway; protein N(6)-(lipoyl)lysine from octanoyl-[acyl-carrier-protein]: step 1/2. Its function is as follows. Catalyzes the transfer of endogenously produced octanoic acid from octanoyl-acyl-carrier-protein onto the lipoyl domains of lipoate-dependent enzymes. Lipoyl-ACP can also act as a substrate although octanoyl-ACP is likely to be the physiological substrate. In Buchnera aphidicola subsp. Schizaphis graminum (strain Sg), this protein is Octanoyltransferase.